The chain runs to 308 residues: uncharacterized protein (308 aa).

Positions 1–19 (MKLLLILILIINNYNLCLS) are cleaved as a signal peptide. Residues Asn-25 and Asn-300 are each glycosylated (N-linked (GlcNAc...) asparagine).

It localises to the secreted. This is an uncharacterized protein from Dictyostelium discoideum (Social amoeba).